The sequence spans 202 residues: uncharacterized protein (202 aa).

The Cytoplasmic portion of the chain corresponds to 1-6 (MITDFL). A helical; Signal-anchor for type II membrane protein transmembrane segment spans residues 7–23 (LAFSILAVSTTLGVSNL). At 24–202 (NKQCRDLLQC…KNGKTRGHSG (179 aa)) the chain is on the extracellular side. The N-linked (GlcNAc...) asparagine glycan is linked to asparagine 53.

It localises to the membrane. This is an uncharacterized protein from Caenorhabditis elegans.